Consider the following 276-residue polypeptide: Urease accessory protein UreD (276 aa).

It belongs to the UreD family. In terms of assembly, ureD, UreF and UreG form a complex that acts as a GTP-hydrolysis-dependent molecular chaperone, activating the urease apoprotein by helping to assemble the nickel containing metallocenter of UreC. The UreE protein probably delivers the nickel.

The protein localises to the cytoplasm. In terms of biological role, required for maturation of urease via the functional incorporation of the urease nickel metallocenter. The polypeptide is Urease accessory protein UreD (Variovorax paradoxus (strain S110)).